Here is a 240-residue protein sequence, read N- to C-terminus: Uridylate kinase (240 aa).

Residue 13 to 16 participates in ATP binding; that stretch reads KASG. The interval 21–26 is involved in allosteric activation by GTP; that stretch reads GSQGFG. G55 serves as a coordination point for UMP. G56 and R60 together coordinate ATP. UMP-binding positions include D75 and 136–143; that span reads TGNPFFTT. ATP is bound by residues T163, Q164, Y169, and D172.

It belongs to the UMP kinase family. In terms of assembly, homohexamer.

Its subcellular location is the cytoplasm. It carries out the reaction UMP + ATP = UDP + ADP. The protein operates within pyrimidine metabolism; CTP biosynthesis via de novo pathway; UDP from UMP (UMPK route): step 1/1. Allosterically activated by GTP. Inhibited by UTP. In terms of biological role, catalyzes the reversible phosphorylation of UMP to UDP. The polypeptide is Uridylate kinase (Brucella melitensis biotype 1 (strain ATCC 23456 / CCUG 17765 / NCTC 10094 / 16M)).